The chain runs to 3507 residues: Dynein axonemal heavy chain 14 (3507 aa).

The tract at residues 91–126 is disordered; that stretch reads PHLPGTQDPLRRVRDPTPIVASSPGRRRGSWSGGYG. Residues 354-381 are a coiled coil; sequence DEFCEEQLQQATQALKQLEDIRNKAISE. The GPAGTGKT motif signature appears at 1164–1171; sequence GPAGTGKT. Residues 1164–1171 and 1427–1434 contribute to the ATP site; these read GPAGTGKT and GPTGGGKT. N-linked (GlcNAc...) asparagine glycosylation is present at asparagine 1818.

It belongs to the dynein heavy chain family. Consists of at least two heavy chains and a number of intermediate and light chains.

It localises to the cytoplasm. The protein localises to the cytoskeleton. It is found in the cilium axoneme. Force generating protein of respiratory cilia. Produces force towards the minus ends of microtubules. Dynein has ATPase activity; the force-producing power stroke is thought to occur on release of ADP. Involved in sperm motility; implicated in sperm flagellar assembly. In Homo sapiens (Human), this protein is Dynein axonemal heavy chain 14 (DNAH14).